The primary structure comprises 95 residues: Ribosome-binding factor A (95 aa).

Belongs to the RbfA family. Interacts with the 30S ribosomal subunit as a monomer, binding in a position overlapping the sites of the A and P site tRNAs, and displacing segments of the 16S rRNA. Probably contacts 16S rRNA and ribosomal protein S9 and S13.

Its subcellular location is the cytoplasm. Its function is as follows. One of several proteins that assist in the late maturation steps of the functional core of the 30S ribosomal subunit. Associates with free 30S ribosomal subunits (but not with 30S subunits that are part of 70S ribosomes or polysomes). Required for efficient processing of 16S rRNA. Probably interacts with the 5'-terminal helix region of 16S rRNA, bringing together different domains of the 30S ribosomal subunit which aids assembly. The chain is Ribosome-binding factor A from Thermus thermophilus (strain ATCC 27634 / DSM 579 / HB8).